The sequence spans 260 residues: Hydroxyethylthiazole kinase 1 (260 aa).

Met-39 is a binding site for substrate. ATP-binding residues include Arg-115 and Thr-160. Gly-187 serves as a coordination point for substrate.

This sequence belongs to the Thz kinase family. It depends on Mg(2+) as a cofactor.

It catalyses the reaction 5-(2-hydroxyethyl)-4-methylthiazole + ATP = 4-methyl-5-(2-phosphooxyethyl)-thiazole + ADP + H(+). It functions in the pathway cofactor biosynthesis; thiamine diphosphate biosynthesis; 4-methyl-5-(2-phosphoethyl)-thiazole from 5-(2-hydroxyethyl)-4-methylthiazole: step 1/1. In terms of biological role, catalyzes the phosphorylation of the hydroxyl group of 4-methyl-5-beta-hydroxyethylthiazole (THZ). In Streptococcus pneumoniae serotype 4 (strain ATCC BAA-334 / TIGR4), this protein is Hydroxyethylthiazole kinase 1.